Reading from the N-terminus, the 336-residue chain is Dihydroorotate dehydrogenase (quinone) (336 aa).

FMN contacts are provided by residues 62 to 66 (AGLDK) and Thr-86. Substrate is bound at residue Lys-66. 111–115 (NRMGF) contacts substrate. FMN-binding residues include Asn-139 and Asn-172. Asn-172 contributes to the substrate binding site. The Nucleophile role is filled by Ser-175. Asn-177 lines the substrate pocket. Lys-217 and Thr-245 together coordinate FMN. Residue 246–247 (NT) participates in substrate binding. Residues Gly-268, Gly-297, and 318 to 319 (YS) contribute to the FMN site.

Belongs to the dihydroorotate dehydrogenase family. Type 2 subfamily. As to quaternary structure, monomer. The cofactor is FMN.

It localises to the cell membrane. It carries out the reaction (S)-dihydroorotate + a quinone = orotate + a quinol. It functions in the pathway pyrimidine metabolism; UMP biosynthesis via de novo pathway; orotate from (S)-dihydroorotate (quinone route): step 1/1. In terms of biological role, catalyzes the conversion of dihydroorotate to orotate with quinone as electron acceptor. This chain is Dihydroorotate dehydrogenase (quinone), found in Salmonella agona (strain SL483).